The following is a 132-amino-acid chain: Salivary cystatin-L2 (132 aa).

The N-terminal stretch at 1 to 18 is a signal peptide; it reads MTSSLALVLVFGGAAVCA. Residues 28–117 form the Cystatin domain; the sequence is ERSNQDDPEY…RTCTTVIYRN (90 aa). The interval 87-131 is required for interaction with mouse ANXA2; it reads TCELTSTYNKDTCQANANAAQRTCTTVIYRNLQGEKSISSFECAA. Disulfide bonds link Cys-88-Cys-99 and Cys-110-Cys-129.

Belongs to the cystatin family. As to quaternary structure, monomer. Interacts (via loop 2) with mouse ANXA2; the interaction results in reduced activation of mouse NLRC4 inflammasome formation upon Anaplasma phagocytophilum infection. In terms of tissue distribution, detected in salivary gland and midgut.

Its subcellular location is the secreted. Functionally, contributes to the suppression of the host's immune response to tick salivary proteins and is important for successful feeding on hosts. Inhibitor of cysteine proteinases. Inhibits host immune responses, probably via its inhibition of host cathepsins. Inhibits host papain (in vitro). Inhibits host cathepsin L (CTSL) (in vitro). Inhibits host cathepsin L2 (CTSV) (in vitro). Attenuates IFN-beta (IFNB1)-triggered JAK/STAT signaling pathway in mouse dendritic cells. Suppresses induction of interferon-stimulated gene IRF7 and production of CXCL10 in lipopolysaccharide (LPS)-activated dendritic cells. Its function is as follows. (Microbial infection) Down-regulates TLR2-mediated host responses to infection by Borrelia burgdorferi and the production of chemokines CCL3 and CXCL10 by host dendritic cells. Enhances infection by the tick-transmitted pathogen B.burgdorferi (in vitro). (Microbial infection) Inhibits host inflammatory responses to Anaplasma phagocytophilum infection. Interacts with mouse ANXA2 and suppresses oligomerization of NLRC4, a key component of host inflammasomes that sense A.phagocytophilum infection. Indirectly targets caspase-1 (CASP1) activation and subsequent IL-1beta (IL1B) and IL18 release by inhibiting reactive oxygen species (ROS) production from NADPH oxidase complex in A.phagocytophilum-infected mouse macrophages. In terms of biological role, (Microbial infection) Promotes replication of tick-borne encephalitis virus in mouse dendritic cells and reduces anti-viral effect of host IFN-beta (IFNB1). This chain is Salivary cystatin-L2, found in Ixodes scapularis (Black-legged tick).